Consider the following 509-residue polypeptide: Steroid 17-alpha-hydroxylase/17,20 lyase (509 aa).

Position 202 (N202) interacts with substrate. A heme-binding site is contributed by C442.

The protein belongs to the cytochrome P450 family. Heme is required as a cofactor.

The protein resides in the endoplasmic reticulum membrane. It localises to the microsome membrane. It carries out the reaction a C21-steroid + reduced [NADPH--hemoprotein reductase] + O2 = a 17alpha-hydroxy-C21-steroid + oxidized [NADPH--hemoprotein reductase] + H2O + H(+). The catalysed reaction is progesterone + reduced [NADPH--hemoprotein reductase] + O2 = 17alpha-hydroxyprogesterone + oxidized [NADPH--hemoprotein reductase] + H2O + H(+). The enzyme catalyses pregnenolone + reduced [NADPH--hemoprotein reductase] + O2 = 17alpha-hydroxypregnenolone + oxidized [NADPH--hemoprotein reductase] + H2O + H(+). It catalyses the reaction 17alpha-hydroxyprogesterone + reduced [NADPH--hemoprotein reductase] + O2 = androst-4-ene-3,17-dione + acetate + oxidized [NADPH--hemoprotein reductase] + H2O + 2 H(+). It carries out the reaction 17alpha-hydroxyprogesterone + reduced [NADPH--hemoprotein reductase] + O2 = 16alpha,17alpha-dihydroxyprogesterone + oxidized [NADPH--hemoprotein reductase] + H2O + H(+). The catalysed reaction is 16alpha,17alpha-dihydroxyprogesterone + reduced [NADPH--hemoprotein reductase] + O2 = 6beta,16alpha,17alpha-trihydroxyprogesterone + oxidized [NADPH--hemoprotein reductase] + H2O + H(+). The enzyme catalyses 17alpha-hydroxypregnenolone + reduced [NADPH--hemoprotein reductase] + O2 = 3beta-hydroxyandrost-5-en-17-one + acetate + oxidized [NADPH--hemoprotein reductase] + H2O + 2 H(+). It catalyses the reaction 16alpha,17alpha-dihydroxypregnenolone + reduced [NADPH--hemoprotein reductase] + O2 = 3beta,16alpha-dihydroxy-androst-5-en-17-one + acetate + oxidized [NADPH--hemoprotein reductase] + H2O + 2 H(+). It carries out the reaction 3beta-hydroxyandrost-5-en-17-one + reduced [NADPH--hemoprotein reductase] + O2 = 3beta,16alpha-dihydroxy-androst-5-en-17-one + oxidized [NADPH--hemoprotein reductase] + H2O + H(+). The catalysed reaction is androst-4-ene-3,17-dione + reduced [NADPH--hemoprotein reductase] + O2 = 16alpha-hydroxyandrost-4-ene-3,17-dione + oxidized [NADPH--hemoprotein reductase] + H2O + H(+). The protein operates within steroid hormone biosynthesis. It functions in the pathway steroid biosynthesis; glucocorticoid biosynthesis. Regulated predominantly by intracellular cAMP levels. The 17,20-lyase activity is stimulated by cytochrome b5, which acts as an allosteric effector increasing the Vmax of the lyase activity. In terms of biological role, a cytochrome P450 monooxygenase involved in corticoid and androgen biosynthesis. Catalyzes 17-alpha hydroxylation of C21 steroids, which is common for both pathways. A second oxidative step, required only for androgen synthesis, involves an acyl-carbon cleavage. The 17-alpha hydroxy intermediates, as part of adrenal glucocorticoids biosynthesis pathway, are precursors of cortisol. Hydroxylates steroid hormones, pregnenolone and progesterone to form 17-alpha hydroxy metabolites, followed by the cleavage of the C17-C20 bond to form C19 steroids, dehydroepiandrosterone (DHEA) and androstenedione. Has 16-alpha hydroxylase activity. Catalyzes 16-alpha hydroxylation of 17-alpha hydroxy pregnenolone, followed by the cleavage of the C17-C20 bond to form 16-alpha-hydroxy DHEA. Also 16-alpha hydroxylates androgens, relevant for estriol synthesis. Mechanistically, uses molecular oxygen inserting one oxygen atom into a substrate, and reducing the second into a water molecule, with two electrons provided by NADPH via cytochrome P450 reductase (CPR; NADPH-ferrihemoprotein reductase). The sequence is that of Steroid 17-alpha-hydroxylase/17,20 lyase (CYP17A1) from Bison bison (American bison).